The primary structure comprises 266 residues: Protein crossbronx-like (266 aa).

In terms of domain architecture, UBC core spans 15 to 178 (KQGYKILAEY…IQELAISSRR (164 aa)). Positions 216–266 (EATCEDDSPPAELLGHIDSSRQLDEDEANQRGKLQAATTDLQHGARCSVAQ) are disordered.

This sequence belongs to the ubiquitin-conjugating enzyme family. FTS subfamily.

The chain is Protein crossbronx-like from Drosophila ananassae (Fruit fly).